The chain runs to 202 residues: 3-isopropylmalate dehydratase small subunit (202 aa).

This sequence belongs to the LeuD family. LeuD type 1 subfamily. In terms of assembly, heterodimer of LeuC and LeuD.

It catalyses the reaction (2R,3S)-3-isopropylmalate = (2S)-2-isopropylmalate. It functions in the pathway amino-acid biosynthesis; L-leucine biosynthesis; L-leucine from 3-methyl-2-oxobutanoate: step 2/4. Catalyzes the isomerization between 2-isopropylmalate and 3-isopropylmalate, via the formation of 2-isopropylmaleate. This is 3-isopropylmalate dehydratase small subunit from Caulobacter vibrioides (strain ATCC 19089 / CIP 103742 / CB 15) (Caulobacter crescentus).